We begin with the raw amino-acid sequence, 452 residues long: Lipase member H (452 aa).

The signal sequence occupies residues 1-16; the sequence is MLRFYLFISLLCLVRS. Asparagine 50, asparagine 66, and asparagine 122 each carry an N-linked (GlcNAc...) asparagine glycan. The Nucleophile role is filled by serine 154. Aspartate 178 serves as the catalytic Charge relay system. Cysteine 233 and cysteine 247 are disulfide-bonded. The Charge relay system role is filled by histidine 249. Asparagine 263 carries an N-linked (GlcNAc...) asparagine glycan. 3 disulfides stabilise this stretch: cysteine 271–cysteine 282, cysteine 285–cysteine 293, and cysteine 428–cysteine 447.

This sequence belongs to the AB hydrolase superfamily. Lipase family. In terms of assembly, interacts with TTMP/C3orf52. As to expression, expressed in liver and lacrimal gland.

The protein resides in the secreted. Its subcellular location is the cell membrane. It catalyses the reaction 1-hexadecanoyl-2-(9Z-octadecenoyl)-sn-glycero-3-phosphate + H2O = 2-(9Z-octadecenoyl)-sn-glycero-3-phosphate + hexadecanoate + H(+). Its function is as follows. Hydrolyzes specifically phosphatidic acid (PA) to produce 2-acyl lysophosphatidic acid (LPA; a potent bioactive lipid mediator) and fatty acid. Does not hydrolyze other phospholipids, like phosphatidylserine (PS), phosphatidylcholine (PC) and phosphatidylethanolamine (PE) or triacylglycerol (TG). The chain is Lipase member H (LIPH) from Oryctolagus cuniculus (Rabbit).